A 339-amino-acid polypeptide reads, in one-letter code: GTP 3',8-cyclase (339 aa).

The region spanning 13–249 is the Radical SAM core domain; it reads RYGRPLRDLR…GEVAQRHAFA (237 aa). Arginine 22 lines the GTP pocket. Cysteine 29 and cysteine 33 together coordinate [4Fe-4S] cluster. Tyrosine 35 provides a ligand contact to S-adenosyl-L-methionine. Cysteine 36 contributes to the [4Fe-4S] cluster binding site. Arginine 75 provides a ligand contact to GTP. Glycine 79 provides a ligand contact to S-adenosyl-L-methionine. Threonine 106 is a binding site for GTP. Serine 130 provides a ligand contact to S-adenosyl-L-methionine. A GTP-binding site is contributed by lysine 168. Methionine 202 contributes to the S-adenosyl-L-methionine binding site. [4Fe-4S] cluster contacts are provided by cysteine 266 and cysteine 269. 271-273 is a binding site for GTP; the sequence is RAR. A [4Fe-4S] cluster-binding site is contributed by cysteine 283.

This sequence belongs to the radical SAM superfamily. MoaA family. In terms of assembly, monomer and homodimer. The cofactor is [4Fe-4S] cluster.

The enzyme catalyses GTP + AH2 + S-adenosyl-L-methionine = (8S)-3',8-cyclo-7,8-dihydroguanosine 5'-triphosphate + 5'-deoxyadenosine + L-methionine + A + H(+). Its pathway is cofactor biosynthesis; molybdopterin biosynthesis. Catalyzes the cyclization of GTP to (8S)-3',8-cyclo-7,8-dihydroguanosine 5'-triphosphate. The polypeptide is GTP 3',8-cyclase (Xanthomonas campestris pv. campestris (strain B100)).